A 589-amino-acid chain; its full sequence is UvrABC system protein C (589 aa).

A GIY-YIG domain is found at Glu10 to Ile87. The UVR domain maps to Ser197–Ile232.

The protein belongs to the UvrC family. In terms of assembly, interacts with UvrB in an incision complex.

The protein resides in the cytoplasm. The UvrABC repair system catalyzes the recognition and processing of DNA lesions. UvrC both incises the 5' and 3' sides of the lesion. The N-terminal half is responsible for the 3' incision and the C-terminal half is responsible for the 5' incision. The polypeptide is UvrABC system protein C (Fusobacterium nucleatum subsp. nucleatum (strain ATCC 25586 / DSM 15643 / BCRC 10681 / CIP 101130 / JCM 8532 / KCTC 2640 / LMG 13131 / VPI 4355)).